Reading from the N-terminus, the 233-residue chain is Biosynthetic peptidoglycan transglycosylase (233 aa).

Residues 17 to 37 (IVLAVLALVVLPYVLIFFYLL) traverse the membrane as a helical segment.

It belongs to the glycosyltransferase 51 family.

Its subcellular location is the cell inner membrane. The enzyme catalyses [GlcNAc-(1-&gt;4)-Mur2Ac(oyl-L-Ala-gamma-D-Glu-L-Lys-D-Ala-D-Ala)](n)-di-trans,octa-cis-undecaprenyl diphosphate + beta-D-GlcNAc-(1-&gt;4)-Mur2Ac(oyl-L-Ala-gamma-D-Glu-L-Lys-D-Ala-D-Ala)-di-trans,octa-cis-undecaprenyl diphosphate = [GlcNAc-(1-&gt;4)-Mur2Ac(oyl-L-Ala-gamma-D-Glu-L-Lys-D-Ala-D-Ala)](n+1)-di-trans,octa-cis-undecaprenyl diphosphate + di-trans,octa-cis-undecaprenyl diphosphate + H(+). It functions in the pathway cell wall biogenesis; peptidoglycan biosynthesis. In terms of biological role, peptidoglycan polymerase that catalyzes glycan chain elongation from lipid-linked precursors. This chain is Biosynthetic peptidoglycan transglycosylase, found in Rhizobium etli (strain ATCC 51251 / DSM 11541 / JCM 21823 / NBRC 15573 / CFN 42).